We begin with the raw amino-acid sequence, 2190 residues long: Voltage-dependent L-type calcium channel subunit alpha-1D (2190 aa).

Low complexity predominate over residues 1 to 10 (MQHHQQQQPE). Disordered regions lie at residues 1–44 (MQHH…SKQT) and 57–96 (QAKAAQNMNTTTAQPVGSLSQRKRQQYAKSKKQGNTSNSR). Topologically, residues 1-121 (MQHHQQQQPE…RACISLVEWK (121 aa)) are cytoplasmic. 2 stretches are compositionally biased toward polar residues: residues 31-44 (PTTQSNSSAPSKQT) and 63-76 (NMNTTTAQPVGSLS). Over residues 77-88 (QRKRQQYAKSKK) the composition is skewed to basic residues. An I repeat occupies 108-404 (NPIRRACISL…LVLGVLSGEF (297 aa)). Residues 122 to 140 (PFDIFILLSIFANCVALAV) traverse the membrane as a helical segment. Topologically, residues 141-158 (YIPFPEDDSNSTNHNLEK) are extracellular. Asparagine 150 carries N-linked (GlcNAc...) asparagine glycosylation. A helical membrane pass occupies residues 159–178 (VEYAFLIIFTVETFLKIIAY). Over 179-190 (GLLLHPNAYVRN) the chain is Cytoplasmic. The helical transmembrane segment at 191–209 (GWNLLDFVIVVVGLFSVIL) threads the bilayer. The Extracellular portion of the chain corresponds to 210–230 (EQLTKETEGGSHSGGKPGGFD). The chain crosses the membrane as a helical span at residues 231-249 (VKALRAFRVLRPLRLVSGV). Topologically, residues 250 to 268 (PSLQVVLNSIIKAMVPLLH) are cytoplasmic. A helical membrane pass occupies residues 269 to 288 (IALLVLFVIIIYAIIGLELF). Topologically, residues 289–376 (IGKMHKSCFL…WVNDAIGCEW (88 aa)) are extracellular. A glycan (N-linked (GlcNAc...) asparagine) is linked at asparagine 324. Glutamate 359 is a Ca(2+) binding site. Residues 377-401 (PWIYFVSLIILGSFFVLNLVLGVLS) traverse the membrane as a helical segment. The Cytoplasmic segment spans residues 402-544 (GEFSKEREKA…RKCRAAVKSV (143 aa)). A binding to the beta subunit region spans residues 424–441 (QQLEEDLKGYLDWITQAE). Residues 478 to 500 (GRSSNKHASMPTSETESVNTENV) are disordered. An II repeat occupies 530–776 (NRFNRRKCRA…VFLAIAVDNL (247 aa)). A helical membrane pass occupies residues 545–564 (TFYWLVIVLVFLNTLTISSE). The Extracellular portion of the chain corresponds to 565 to 579 (HYNQPDWLTQIQDIA). Residues 580-598 (NKVLLALFTCEMLVKMYSL) form a helical membrane-spanning segment. At 599 to 606 (GLQAYFVS) the chain is on the cytoplasmic side. A helical transmembrane segment spans residues 607–625 (LFNRFDCFVVCGGIVETIL). Topologically, residues 626–635 (VELEIMSPLG) are extracellular. A helical transmembrane segment spans residues 636-654 (ISVFRCVRLLRIFKVTRHW). At 655–673 (ASLSNLVASLLNSMKSIAS) the chain is on the cytoplasmic side. The helical transmembrane segment at 674–694 (LLLLLFLFIIIFSLLGMQLFG) threads the bilayer. At 695–748 (GKFNFDETQTKRSTFDNFPQALLTVFQILTGEDWNAVMYDGIMAYGGPSSSGMI) the chain is on the extracellular side. Residue glutamate 726 coordinates Ca(2+). A helical transmembrane segment spans residues 749 to 773 (VCIYFIILFICGNYILLNVFLAIAV). Residues 774–907 (DNLADAESLN…VGCHRLINHH (134 aa)) are Cytoplasmic-facing. The span at 787 to 823 (KEEAEEKERKKNARKESLENKKSEKSEGDQKKPKDSK) shows a compositional bias: basic and acidic residues. The tract at residues 787-869 (KEEAEEKERK…VPAGPRPRRI (83 aa)) is disordered. Acidic residues predominate over residues 847-859 (VGEDEEDEEDEPE). Residues 894 to 1176 (NPIRVGCHRL…IFVGFVIVTF (283 aa)) form an III repeat. A helical membrane pass occupies residues 908–926 (IFTNLILVFIMLSSVSLAA). Over 927-942 (EDPIRSHSFRNNILGY) the chain is Extracellular. Residues 943–962 (ADYVFTSMFTFEIILKMTAF) form a helical membrane-spanning segment. The Cytoplasmic segment spans residues 963 to 974 (GAFLHKGSFCRN). The chain crosses the membrane as a helical span at residues 975–993 (YFNLLDLLVVGVSLVSFGI). Topologically, residues 994-999 (QSSAIS) are extracellular. Residues 1000–1019 (VVKILRVLRVLRPLRAINRA) traverse the membrane as a helical segment. Residues 1020-1038 (KGLKHVVQCVFVAIRTIGN) are Cytoplasmic-facing. A helical membrane pass occupies residues 1039–1058 (IMIVTTLLQFMFACIGVQLF). Residues 1059–1148 (KGKFYKCTDE…VGPVYNYRVE (90 aa)) are Extracellular-facing. Residues 1096 to 1186 (RVWQNSDFNF…QEQGEQEYKN (91 aa)) are dihydropyridine binding. Glutamate 1122 serves as a coordination point for Ca(2+). Residues 1149-1169 (ISIFFIIYIIIIAFFMMNIFV) traverse the membrane as a helical segment. Over 1170–1226 (GFVIVTFQEQGEQEYKNCELDKNQRQCVEYALKARPLRRYIPKNPYQYKFWYVVNST) the chain is Cytoplasmic. An IV repeat occupies 1213–1496 (NPYQYKFWYV…LFVAVIMDNF (284 aa)). A helical membrane pass occupies residues 1227–1245 (GFEYIMFVLIMLNTLCLAM). Residues 1246 to 1260 (QHYGQSKLFNDAMDI) are Extracellular-facing. The chain crosses the membrane as a helical span at residues 1261–1280 (MNMVFTGVFTVEMVLKLIAF). At 1281-1297 (KPKIFVRKKERWLGYFS) the chain is on the cytoplasmic side. The helical transmembrane segment at 1298-1319 (DAWNTFDSLIVIGSIVDVVLSE) threads the bilayer. At 1320–1342 (ADPKPTETVTTDESGNSEDSARI) the chain is on the extracellular side. The chain crosses the membrane as a helical span at residues 1343-1362 (SITFFRLFRVMRLVKLLSRG). Topologically, residues 1363 to 1381 (EGIRTLLWTFIKSFQALPY) are cytoplasmic. Residues 1382–1401 (VALLIAMLFFIYAVIGMQVF) form a helical membrane-spanning segment. Residues 1402 to 1468 (GKVAMRDNNQ…GEEYTCGSNF (67 aa)) are Extracellular-facing. The segment at 1449 to 1515 (RCDPESDYNP…LGPHHLDEFK (67 aa)) is dihydropyridine binding. Residues 1461-1504 (EYTCGSNFAIIYFISFYMLCAFLIINLFVAVIMDNFDYLTRDWS) form a phenylalkylamine binding region. A helical transmembrane segment spans residues 1469 to 1493 (AIIYFISFYMLCAFLIINLFVAVIM). Topologically, residues 1494 to 2190 (DNFDYLTRDW…ADEMICITSL (697 aa)) are cytoplasmic. Disordered stretches follow at residues 1736–1787 (THRP…NANL), 1803–1833 (FGSHEHRSENGYHSYSRADHEKRRRPSSRRT), 1917–1952 (HGFFEEDDSQTCYDTKRSPRRRLLPPTPASNRRSSF), and 1995–2025 (SSKAHKHSPSRSTRSWATPPATPPNRDHTPY). The segment covering 1805–1823 (SHEHRSENGYHSYSRADHE) has biased composition (basic and acidic residues). A compositionally biased stretch (basic residues) spans 1824 to 1833 (KRRRPSSRRT).

Belongs to the calcium channel alpha-1 subunit (TC 1.A.1.11) family. CACNA1D subfamily. Voltage-dependent calcium channels are multisubunit complexes, consisting of alpha-1, alpha-2, beta and delta subunits in a 1:1:1:1 ratio. The channel activity is directed by the pore-forming and voltage-sensitive alpha-1 subunit. In many cases, this subunit is sufficient to generate voltage-sensitive calcium channel activity. The auxiliary subunits beta and alpha-2/delta linked by a disulfide bridge regulate the channel activity. Interacts with RIMBP2. In terms of tissue distribution, expressed in the basilar papilla of the cochlea.

It is found in the membrane. The catalysed reaction is Ca(2+)(in) = Ca(2+)(out). Its function is as follows. The isoform alpha-1D gives rise to L-type calcium currents. Long-lasting (L-type) calcium channels belong to the 'high-voltage activated' (HVA) group. The sequence is that of Voltage-dependent L-type calcium channel subunit alpha-1D (CACNA1D) from Gallus gallus (Chicken).